Reading from the N-terminus, the 29-residue chain is Chassatide C1 (29 aa).

The segment at residues 1-29 is a cross-link (cyclopeptide (Gly-Asn)); it reads GDACGETCFTGICFTAGCSCNPWPTCTRN. 3 disulfides stabilise this stretch: C4–C18, C8–C20, and C13–C26.

Post-translationally, this is a cyclic peptide. In terms of tissue distribution, expressed in leaf, fruit, pedical and stem but not in root (at protein level).

In terms of biological role, probably participates in a plant defense mechanism. The sequence is that of Chassatide C1 from Chassalia chartacea (Chassalia curviflora).